A 398-amino-acid chain; its full sequence is Phosphoglycerate kinase (398 aa).

Residues 23–25 (DLN), Arg38, 61–64 (HFGR), Arg120, and Arg153 each bind substrate. ATP contacts are provided by residues Lys203, Glu325, and 355-358 (GGDT).

This sequence belongs to the phosphoglycerate kinase family. Monomer.

Its subcellular location is the cytoplasm. It carries out the reaction (2R)-3-phosphoglycerate + ATP = (2R)-3-phospho-glyceroyl phosphate + ADP. The protein operates within carbohydrate degradation; glycolysis; pyruvate from D-glyceraldehyde 3-phosphate: step 2/5. In Mesorhizobium japonicum (strain LMG 29417 / CECT 9101 / MAFF 303099) (Mesorhizobium loti (strain MAFF 303099)), this protein is Phosphoglycerate kinase.